We begin with the raw amino-acid sequence, 166 residues long: Phospholipase A2 inhibitor clone 05 (166 aa).

A signal peptide spans 1-19; the sequence is MRLILLSSLLLLGIFLADG. A C-type lectin domain is found at 46-161; it reads LKGAFLTVHR…CDDNLLVVCE (116 aa). Intrachain disulfides connect C83–C160 and C138–C152. N122 carries N-linked (GlcNAc...) asparagine glycosylation.

The protein belongs to the alpha-type phospholipase A2 inhibitor family. As to quaternary structure, homotrimer; non-covalently linked. Expressed by the liver.

The protein localises to the secreted. Its function is as follows. This phospholipase A2 inhibitor binds directly phospholipase A2 in the presence or absence of calcium. This is Phospholipase A2 inhibitor clone 05 from Bothrops moojeni (Lance-headed viper).